Consider the following 387-residue polypeptide: MEQVVIVDAIRTPMGRSKGGAFRNVRAEDLSAHLMRSLLARNPSLTAATLDDIYWGCVQQTLEQGFNIARNAALLAEIPHSVPAVTVNRLCGSSMQALHDAARMIMTGDAQVCLVGGVEHMGHVPMSHGVDFHPGLSRNVAKAAGMMGLTAEMLSRLHGISREMQDQFAARSHARAWAATQSGAFKTEIIPTGGHDADGVLKQFNYDEVIRPETTVEALSTLRPAFDPVSGTVTAGTSSALSDGAAAMLVMSESRARELGLKPRARIRSMAVVGCDPSIMGYGPVPASKLALKKAGLSASDIDVFEMNEAFAAQILPCIKDLGLMEQIDEKINLNGGAIALGHPLGCSGARISTTLINLMERKDAQFGLATMCIGLGQGIATVFERV.

The active-site Acyl-thioester intermediate is the C91. Residues H343 and C373 each act as proton acceptor in the active site.

It belongs to the thiolase-like superfamily. Thiolase family. In terms of assembly, heterotetramer of two alpha chains (FadB) and two beta chains (FadA).

Its subcellular location is the cytoplasm. The enzyme catalyses an acyl-CoA + acetyl-CoA = a 3-oxoacyl-CoA + CoA. It participates in lipid metabolism; fatty acid beta-oxidation. Its function is as follows. Catalyzes the final step of fatty acid oxidation in which acetyl-CoA is released and the CoA ester of a fatty acid two carbons shorter is formed. The protein is 3-ketoacyl-CoA thiolase of Salmonella paratyphi A (strain ATCC 9150 / SARB42).